The primary structure comprises 73 residues: Translation initiation factor IF-1 (73 aa).

The 73-residue stretch at 1–73 (MAKKEDTIVL…TKARVVYRHR (73 aa)) folds into the S1-like domain.

The protein belongs to the IF-1 family. Component of the 30S ribosomal translation pre-initiation complex which assembles on the 30S ribosome in the order IF-2 and IF-3, IF-1 and N-formylmethionyl-tRNA(fMet); mRNA recruitment can occur at any time during PIC assembly.

It localises to the cytoplasm. One of the essential components for the initiation of protein synthesis. Stabilizes the binding of IF-2 and IF-3 on the 30S subunit to which N-formylmethionyl-tRNA(fMet) subsequently binds. Helps modulate mRNA selection, yielding the 30S pre-initiation complex (PIC). Upon addition of the 50S ribosomal subunit IF-1, IF-2 and IF-3 are released leaving the mature 70S translation initiation complex. The sequence is that of Translation initiation factor IF-1 from Chlamydia caviae (strain ATCC VR-813 / DSM 19441 / 03DC25 / GPIC) (Chlamydophila caviae).